Reading from the N-terminus, the 3096-residue chain is Unconventional myosin-XVB (3096 aa).

Disordered stretches follow at residues 1 to 330, 389 to 489, 508 to 540, and 553 to 649; these read MGRN…GPED, RPPE…GWGR, GGMP…ETPD, and AGRA…GPRL. Over residues 19–33 the composition is skewed to low complexity; the sequence is ASGEQESGSASADGA. A compositionally biased stretch (basic and acidic residues) spans 34–50; the sequence is PSRERRSDRGQADRAKP. Positions 124–143 are enriched in basic residues; it reads RRRRKRKDKGPSARRGRRTP. Basic and acidic residues-rich tracts occupy residues 212 to 222 and 261 to 288; these read DWPHADTRGRE and TFED…RGAE. The span at 307–330 shows a compositional bias: low complexity; that stretch reads AVGQVPAAAGEGEAGAAAGAGPED. Residues 406-416 are compositionally biased toward basic and acidic residues; sequence WGRRKPDEGRG. Positions 417–426 are enriched in basic residues; the sequence is HGRGSKGRGR. A compositionally biased stretch (basic and acidic residues) spans 427 to 489; the sequence is GKADEGRGHE…HQRGYEGWGR (63 aa). The Myosin motor domain maps to 720 to 1394; sequence EDMEDLARLR…GWQRLEELRD (675 aa). 818–825 provides a ligand contact to ATP; the sequence is GHSGSGKT. The tract at residues 1273–1295 is actin-binding; sequence LEDLIARLGRSHVYFIQCLTPNP. One can recognise an IQ domain in the interval 1414 to 1443; it reads RQRVLPRMQARMRGFQARKRYLRRRAALGQ. The 152-residue stretch at 1551-1702 folds into the MyTH4 1 domain; that stretch reads RPGQPLAKPL…PTQLEWLAGW (152 aa). 3 disordered regions span residues 1802–1833, 1963–2026, and 2040–2262; these read PGIQ…VQRS, MQQR…PKSF, and QITV…LPED. The segment covering 1808–1820 has biased composition (pro residues); sequence SLPPGPPPGPAPT. Residues 1963 to 1980 are compositionally biased toward low complexity; the sequence is MQQRQQQARASEAASQAS. Acidic residues predominate over residues 2059-2076; sequence AQEEEEEEEEEEEQEEQE. Residues 2102–2116 show a composition bias toward basic and acidic residues; it reads APKEAEAEPAKETAA. Pro residues predominate over residues 2159–2170; that stretch reads GPVPVPVQPSRP. Basic and acidic residues predominate over residues 2176-2185; the sequence is RKIDPKDEAL. Pro residues-rich tracts occupy residues 2199–2217 and 2247–2261; these read MLSP…PRPK and HTPP…PLPE. In terms of domain architecture, SH3 spans 2481-2542; sequence KDSGYVIALR…PADIVQPAAA (62 aa). A disordered region spans residues 2548–2567; that stretch reads SKEQRSGWHKGQLSNGEPGL. A MyTH4 2 domain is found at 2643–2789; that stretch reads YTKAPIQESL…PPPGEMKAFL (147 aa). The FERM domain occupies 2795-3096; the sequence is RLLLIHLPGG…ASCTEWPSIN (302 aa).

The protein belongs to the TRAFAC class myosin-kinesin ATPase superfamily. Myosin family. Detected in brain, stomach and kidney.

It is found in the cytoplasm. This Homo sapiens (Human) protein is Unconventional myosin-XVB.